The chain runs to 432 residues: MSLSPKQVQLFEQASKHIPGGVNSPVRAFNGVGGTPVFIKKAQGAYLWDEDDKRYVDYVGSWGPMILGHAHPDIIQAVQTAAVDGLSFGAPTVHETTLADIICDIMPSIEMVRMTNSGTEATMTAIRLARGYTGRDKIVKFEGCYHGHSDSLLVKAGSGLLTLGEGEPTSKGVPVDFAKHTLTLPYNNIEALKECFAKFGHEIAGVIVEPVAGNMNLVTPIDGFLQAIRDVCDEYGSVFIIDEVMTGFRVALGGAQSVYQVKPDLTTLGKIIGAGLPVGAFGGKREIMECIAPLGGVYQAGTLSGNPLAMRAGITMFKHLREPDFYSKLEAKLQKLLTGLQAAANEAGIAFKTQQVGGMFGLYFTDQEDITSFDSMLACDTDAFKKFFHGMLERGVNLAPSAFEAGFISSAHSDEDIELTIQAAKETFAEMK.

Lysine 270 carries the N6-(pyridoxal phosphate)lysine modification.

Belongs to the class-III pyridoxal-phosphate-dependent aminotransferase family. HemL subfamily. Homodimer. It depends on pyridoxal 5'-phosphate as a cofactor.

It localises to the cytoplasm. The enzyme catalyses (S)-4-amino-5-oxopentanoate = 5-aminolevulinate. The protein operates within porphyrin-containing compound metabolism; protoporphyrin-IX biosynthesis; 5-aminolevulinate from L-glutamyl-tRNA(Glu): step 2/2. This chain is Glutamate-1-semialdehyde 2,1-aminomutase, found in Acinetobacter baylyi (strain ATCC 33305 / BD413 / ADP1).